A 482-amino-acid chain; its full sequence is UDP-N-acetylmuramoyl-L-alanyl-D-glutamate--2,6-diaminopimelate ligase 1 (482 aa).

S30 provides a ligand contact to UDP-N-acetyl-alpha-D-muramoyl-L-alanyl-D-glutamate. 110–116 serves as a coordination point for ATP; sequence GTNGKTT. UDP-N-acetyl-alpha-D-muramoyl-L-alanyl-D-glutamate is bound by residues 152–153, S179, and R187; that span reads TT. Position 219 is an N6-carboxylysine (K219). Meso-2,6-diaminopimelate contacts are provided by residues R378, 402 to 405, G452, and E456; that span reads DNPR. The short motif at 402–405 is the Meso-diaminopimelate recognition motif element; the sequence is DNPR.

Belongs to the MurCDEF family. MurE subfamily. The cofactor is Mg(2+). In terms of processing, carboxylation is probably crucial for Mg(2+) binding and, consequently, for the gamma-phosphate positioning of ATP.

The protein resides in the cytoplasm. It catalyses the reaction UDP-N-acetyl-alpha-D-muramoyl-L-alanyl-D-glutamate + meso-2,6-diaminopimelate + ATP = UDP-N-acetyl-alpha-D-muramoyl-L-alanyl-gamma-D-glutamyl-meso-2,6-diaminopimelate + ADP + phosphate + H(+). Its pathway is cell wall biogenesis; peptidoglycan biosynthesis. Its function is as follows. Catalyzes the addition of meso-diaminopimelic acid to the nucleotide precursor UDP-N-acetylmuramoyl-L-alanyl-D-glutamate (UMAG) in the biosynthesis of bacterial cell-wall peptidoglycan. The protein is UDP-N-acetylmuramoyl-L-alanyl-D-glutamate--2,6-diaminopimelate ligase 1 of Clostridium acetobutylicum (strain ATCC 824 / DSM 792 / JCM 1419 / IAM 19013 / LMG 5710 / NBRC 13948 / NRRL B-527 / VKM B-1787 / 2291 / W).